Here is a 338-residue protein sequence, read N- to C-terminus: Ketol-acid reductoisomerase (NADP(+)) (338 aa).

The region spanning 1-181 is the KARI N-terminal Rossmann domain; the sequence is MKVFYDKDAD…GGGRAGIIET (181 aa). Residues 24 to 27, arginine 47, and serine 52 contribute to the NADP(+) site; that span reads YGSQ. Residue histidine 107 is part of the active site. Glycine 133 serves as a coordination point for NADP(+). The region spanning 182-327 is the KARI C-terminal knotted domain; it reads NFREETETDL…AKLRSMMPWI (146 aa). Mg(2+)-binding residues include aspartate 190, glutamate 194, glutamate 226, and glutamate 230. Serine 251 contacts substrate.

It belongs to the ketol-acid reductoisomerase family. It depends on Mg(2+) as a cofactor.

It carries out the reaction (2R)-2,3-dihydroxy-3-methylbutanoate + NADP(+) = (2S)-2-acetolactate + NADPH + H(+). It catalyses the reaction (2R,3R)-2,3-dihydroxy-3-methylpentanoate + NADP(+) = (S)-2-ethyl-2-hydroxy-3-oxobutanoate + NADPH + H(+). It functions in the pathway amino-acid biosynthesis; L-isoleucine biosynthesis; L-isoleucine from 2-oxobutanoate: step 2/4. The protein operates within amino-acid biosynthesis; L-valine biosynthesis; L-valine from pyruvate: step 2/4. Functionally, involved in the biosynthesis of branched-chain amino acids (BCAA). Catalyzes an alkyl-migration followed by a ketol-acid reduction of (S)-2-acetolactate (S2AL) to yield (R)-2,3-dihydroxy-isovalerate. In the isomerase reaction, S2AL is rearranged via a Mg-dependent methyl migration to produce 3-hydroxy-3-methyl-2-ketobutyrate (HMKB). In the reductase reaction, this 2-ketoacid undergoes a metal-dependent reduction by NADPH to yield (R)-2,3-dihydroxy-isovalerate. In Paraburkholderia phytofirmans (strain DSM 17436 / LMG 22146 / PsJN) (Burkholderia phytofirmans), this protein is Ketol-acid reductoisomerase (NADP(+)).